Here is a 413-residue protein sequence, read N- to C-terminus: Putative F-box protein At3g17560 (413 aa).

Residues 9-55 form the F-box domain; the sequence is TKLLFDLPQDVIEEIFSKVPVTCLRRIRSTCKRLYALLKDRGFIRKH.

The sequence is that of Putative F-box protein At3g17560 from Arabidopsis thaliana (Mouse-ear cress).